The following is a 313-amino-acid chain: Porphobilinogen deaminase (313 aa).

Cys242 bears the S-(dipyrrolylmethanemethyl)cysteine mark.

This sequence belongs to the HMBS family. In terms of assembly, monomer. It depends on dipyrromethane as a cofactor.

The catalysed reaction is 4 porphobilinogen + H2O = hydroxymethylbilane + 4 NH4(+). The protein operates within porphyrin-containing compound metabolism; protoporphyrin-IX biosynthesis; coproporphyrinogen-III from 5-aminolevulinate: step 2/4. Functionally, tetrapolymerization of the monopyrrole PBG into the hydroxymethylbilane pre-uroporphyrinogen in several discrete steps. The protein is Porphobilinogen deaminase of Pectobacterium carotovorum subsp. carotovorum (strain PC1).